We begin with the raw amino-acid sequence, 260 residues long: Ribosomal RNA small subunit methyltransferase G (260 aa).

S-adenosyl-L-methionine is bound by residues Gly-94, Phe-99, 117–119 (DST), 145–146 (AE), and Arg-164. The interval 236-260 (APTPPPYPRSPGTPKRQPLGQSNRP) is disordered. Over residues 237–246 (PTPPPYPRSP) the composition is skewed to pro residues.

Belongs to the methyltransferase superfamily. RNA methyltransferase RsmG family.

It localises to the cytoplasm. In terms of biological role, specifically methylates the N7 position of a guanine in 16S rRNA. This Synechococcus sp. (strain JA-2-3B'a(2-13)) (Cyanobacteria bacterium Yellowstone B-Prime) protein is Ribosomal RNA small subunit methyltransferase G.